Consider the following 443-residue polypeptide: Palmitoyltransferase pfa5 (443 aa).

Transmembrane regions (helical) follow at residues Ile-17 to Leu-37 and Ala-57 to Leu-77. Positions Cys-96–Val-137 are disordered. The span at Lys-107 to Ser-123 shows a compositional bias: basic residues. The span at Lys-124–Val-137 shows a compositional bias: basic and acidic residues. In terms of domain architecture, DHHC spans Val-175 to Val-225. A run of 2 helical transmembrane segments spans residues Phe-220–Ile-240 and Trp-256–Ser-276. Residues Ala-410–Asn-443 form a disordered region.

Belongs to the DHHC palmitoyltransferase family. PFA5 subfamily. Post-translationally, autopalmitoylated.

It localises to the membrane. It carries out the reaction L-cysteinyl-[protein] + hexadecanoyl-CoA = S-hexadecanoyl-L-cysteinyl-[protein] + CoA. The sequence is that of Palmitoyltransferase pfa5 (pfa5) from Aspergillus fumigatus (strain ATCC MYA-4609 / CBS 101355 / FGSC A1100 / Af293) (Neosartorya fumigata).